Reading from the N-terminus, the 1906-residue chain is Alpha-2-macroglobulin homolog (1906 aa).

A signal peptide spans 1–21 (MIIRVCIRCFIVLTLVLGIGG). A lipid anchor (N-palmitoyl cysteine) is attached at Cys22. Cys22 carries S-diacylglycerol cysteine lipidation.

The protein belongs to the protease inhibitor I39 (alpha-2-macroglobulin) family. Bacterial alpha-2-macroglobulin subfamily.

The protein localises to the cell membrane. This Nostoc sp. (strain PCC 7120 / SAG 25.82 / UTEX 2576) protein is Alpha-2-macroglobulin homolog.